The sequence spans 147 residues: Glucosamine 6-phosphate N-acetyltransferase (147 aa).

Residues 7–147 (LELRVLEESD…AHERQMRLDL (141 aa)) form the N-acetyltransferase domain. D-glucosamine 6-phosphate-binding positions include Thr28 and 86-88 (EDV). Residues 88–90 (VVV) and 96–101 (GAGLGK) each bind acetyl-CoA. D-glucosamine 6-phosphate-binding positions include 117-118 (YK) and Asp122. 131–133 (YEK) lines the acetyl-CoA pocket.

It belongs to the acetyltransferase family. GNA1 subfamily. In terms of assembly, homodimer. In terms of processing, contains poly-N-acetyllactosamines.

The protein resides in the glycosome. The catalysed reaction is D-glucosamine 6-phosphate + acetyl-CoA = N-acetyl-D-glucosamine 6-phosphate + CoA + H(+). The protein operates within nucleotide-sugar biosynthesis; UDP-N-acetyl-alpha-D-glucosamine biosynthesis; N-acetyl-alpha-D-glucosamine 1-phosphate from alpha-D-glucosamine 6-phosphate (route I): step 1/2. Functionally, involved in the biosynthesis of UDP-N-acetyl-alpha-D-glucosamine. Catalyzes the formation of N-acetyl-D-glucosamine 6-phosphate from acetyl-coenzyme A (acetyl-CoA) and D-glucosamine 6-phosphate. The protein is Glucosamine 6-phosphate N-acetyltransferase of Trypanosoma brucei brucei.